The primary structure comprises 377 residues: uncharacterized protein (377 aa).

The first 23 residues, 1-23 (MLKFRNFFKLTLLTLASAFFLSG), serve as a signal peptide directing secretion. A lipid anchor (N-palmitoyl cysteine) is attached at Cys-24. A lipid anchor (S-diacylglycerol cysteine) is attached at Cys-24.

It is found in the cell membrane. This is an uncharacterized protein from Mycoplasma genitalium (strain ATCC 33530 / DSM 19775 / NCTC 10195 / G37) (Mycoplasmoides genitalium).